A 60-amino-acid polypeptide reads, in one-letter code: Small ribosomal subunit protein eS31 (60 aa).

Zn(2+) is bound by residues Cys-27, Cys-30, Cys-45, and Cys-48. The segment at 27 to 48 (CPRCGPGVFMAEHLNRYACGKC) adopts a C4-type zinc-finger fold.

The protein belongs to the eukaryotic ribosomal protein eS31 family. As to quaternary structure, part of the 30S ribosomal subunit. Requires Zn(2+) as cofactor.

In Methanocaldococcus jannaschii (strain ATCC 43067 / DSM 2661 / JAL-1 / JCM 10045 / NBRC 100440) (Methanococcus jannaschii), this protein is Small ribosomal subunit protein eS31.